We begin with the raw amino-acid sequence, 776 residues long: Acetone carboxylase alpha subunit (776 aa).

As to quaternary structure, heterohexamer of two alpha, two beta and two gamma subunits. Fe cation serves as cofactor. Mg(2+) is required as a cofactor. It depends on Zn(2+) as a cofactor. The N-terminus is blocked.

It catalyses the reaction acetone + hydrogencarbonate + 2 ATP + 3 H2O = acetoacetate + 2 AMP + 4 phosphate + 4 H(+). In terms of biological role, catalyzes the carboxylation of acetone to form acetoacetate. Has a reduced activity on butanone, and no activity on 2-pentatone, 3-pentatone, 2-hexanone, chloroacetone, pyruvate, phosphoenolpyruvate, acetaldehyde, propionaldehyde and propylene oxide. The chain is Acetone carboxylase alpha subunit from Xanthobacter autotrophicus (strain ATCC BAA-1158 / Py2).